A 241-amino-acid chain; its full sequence is Adenosine 5'-phosphosulfate reductase (241 aa).

Positions 122, 123, 205, and 208 each coordinate [4Fe-4S] cluster. Cys-231 functions as the Nucleophile; cysteine thiosulfonate intermediate in the catalytic mechanism.

This sequence belongs to the PAPS reductase family. CysH subfamily. It depends on [4Fe-4S] cluster as a cofactor.

Its subcellular location is the cytoplasm. The enzyme catalyses [thioredoxin]-disulfide + sulfite + AMP + 2 H(+) = adenosine 5'-phosphosulfate + [thioredoxin]-dithiol. The protein operates within sulfur metabolism; hydrogen sulfide biosynthesis; sulfite from sulfate. Catalyzes the formation of sulfite from adenosine 5'-phosphosulfate (APS) using thioredoxin as an electron donor. This is Adenosine 5'-phosphosulfate reductase from Shouchella clausii (strain KSM-K16) (Alkalihalobacillus clausii).